We begin with the raw amino-acid sequence, 477 residues long: Asparaginyl-tRNA synthetase (477 aa).

A mitochondrion-targeting transit peptide spans 1 to 14 (MLGVRCLLRSVRFC). Lys-353 bears the N6-acetyllysine mark.

The protein belongs to the class-II aminoacyl-tRNA synthetase family. As to quaternary structure, homodimer.

It localises to the mitochondrion matrix. Its subcellular location is the mitochondrion. It carries out the reaction tRNA(Asn) + L-asparagine + ATP = L-asparaginyl-tRNA(Asn) + AMP + diphosphate + H(+). Its function is as follows. Mitochondrial aminoacyl-tRNA synthetase that catalyzes the specific attachment of the asparagine amino acid (aa) to the homologous transfer RNA (tRNA), further participating in protein synthesis. The reaction occurs in a two steps: asparagine is first activated by ATP to form Asn-AMP and then transferred to the acceptor end of tRNA(Asn). The polypeptide is Asparaginyl-tRNA synthetase (Homo sapiens (Human)).